We begin with the raw amino-acid sequence, 345 residues long: Ephrin-B1 (345 aa).

The signal sequence occupies residues 1-24 (MARPGQRWLSKWLVAMVVLTLCRL). The Extracellular portion of the chain corresponds to 25-236 (ATPLAKNLEP…GDSDSFFNSK (212 aa)). An Ephrin RBD domain is found at 30–164 (KNLEPVSWSS…TRTMKIVMKV (135 aa)). Intrachain disulfides connect Cys64-Cys101 and Cys89-Cys153. Asn139 is a glycosylation site (N-linked (GlcNAc...) asparagine). Residues 169-227 (NAVTPEQLTTSRPSKESDNTVKTATQAPGRGSQGDSDGKHETVNQEEKSGPGAGGGGSG) form a disordered region. Basic and acidic residues predominate over residues 204–217 (SDGKHETVNQEEKS). A helical transmembrane segment spans residues 237–257 (VALFAAVGAGCVIFLLIIIFL). The Cytoplasmic portion of the chain corresponds to 258-345 (TVLLLKLRKR…QSPANIYYKV (88 aa)). A Nuclear localization signal motif is present at residues 259 to 272 (VLLLKLRKRHRKHT). The interval 262–293 (LKLRKRHRKHTQQRAAALSLSTLASPKGGSGT) is interaction with ZHX2. A phosphoserine mark is found at Ser280 and Ser286. Positions 343–345 (YKV) match the PDZ-binding motif.

It belongs to the ephrin family. As to quaternary structure, interacts (via PDZ-binding motif) with GRIP1 and GRIP2 (via PDZ domain 6). Interacts with TLE1. The intracellular domain peptide interacts with ZHX2; the interaction enhances ZHX2 transcriptional repression activity. In terms of processing, inducible phosphorylation of tyrosine residues in the cytoplasmic domain. Proteolytically processed. The ectodomain is cleaved, probably by a metalloprotease, to produce a membrane-tethered C-terminal fragment. This fragment is then further processed by the gamma-secretase complex to yield a soluble intracellular domain peptide which can translocate to the nucleus. The intracellular domain peptide is highly labile suggesting that it is targeted for degradation by the proteasome. As to expression, expressed on lateral floor plate cells, specifically on commissural axon segments that have passed through the floor plate. Expressed in cells of the retinal ganglion cell layer during retinal axon guidance to the optic disk. Expressed in myogenic progenitor cells.

The protein localises to the cell membrane. It localises to the membrane raft. It is found in the nucleus. Functionally, cell surface transmembrane ligand for Eph receptors, a family of receptor tyrosine kinases which are crucial for migration, repulsion and adhesion during neuronal, vascular and epithelial development. Binding to Eph receptors residing on adjacent cells leads to contact-dependent bidirectional signaling into neighboring cells. Shows high affinity for the receptor tyrosine kinase EPHB1/ELK. Can also bind EPHB2 and EPHB3. Binds to, and induces the collapse of, commissural axons/growth cones in vitro. May play a role in constraining the orientation of longitudinally projecting axons. The sequence is that of Ephrin-B1 (Efnb1) from Mus musculus (Mouse).